We begin with the raw amino-acid sequence, 269 residues long: 2-dehydro-3-deoxyphosphooctonate aldolase (269 aa).

It belongs to the KdsA family.

The protein localises to the cytoplasm. It catalyses the reaction D-arabinose 5-phosphate + phosphoenolpyruvate + H2O = 3-deoxy-alpha-D-manno-2-octulosonate-8-phosphate + phosphate. It functions in the pathway carbohydrate biosynthesis; 3-deoxy-D-manno-octulosonate biosynthesis; 3-deoxy-D-manno-octulosonate from D-ribulose 5-phosphate: step 2/3. The protein operates within bacterial outer membrane biogenesis; lipopolysaccharide biosynthesis. This chain is 2-dehydro-3-deoxyphosphooctonate aldolase, found in Chlamydia abortus (strain DSM 27085 / S26/3) (Chlamydophila abortus).